Consider the following 452-residue polypeptide: Bifunctional protein GlmU (452 aa).

The tract at residues 1–224 (MNIVILAAGM…EWETHGVNSK (224 aa)) is pyrophosphorylase. UDP-N-acetyl-alpha-D-glucosamine contacts are provided by residues 6-9 (LAAG), K20, Q71, 76-77 (GT), 98-100 (YGD), G135, E149, N164, and N222. D100 contacts Mg(2+). N222 serves as a coordination point for Mg(2+). Residues 225–245 (VQLAELERIHQRNIAHALLEQ) form a linker region. Positions 246–452 (GVTLADPARI…NWQRPVKIKK (207 aa)) are N-acetyltransferase. 2 residues coordinate UDP-N-acetyl-alpha-D-glucosamine: R328 and K346. The Proton acceptor role is filled by H358. UDP-N-acetyl-alpha-D-glucosamine is bound by residues Y361 and N372. Residues A375, 381-382 (NY), S400, A418, and R435 each bind acetyl-CoA.

The protein in the N-terminal section; belongs to the N-acetylglucosamine-1-phosphate uridyltransferase family. It in the C-terminal section; belongs to the transferase hexapeptide repeat family. As to quaternary structure, homotrimer. Mg(2+) is required as a cofactor.

Its subcellular location is the cytoplasm. It catalyses the reaction alpha-D-glucosamine 1-phosphate + acetyl-CoA = N-acetyl-alpha-D-glucosamine 1-phosphate + CoA + H(+). The catalysed reaction is N-acetyl-alpha-D-glucosamine 1-phosphate + UTP + H(+) = UDP-N-acetyl-alpha-D-glucosamine + diphosphate. It participates in nucleotide-sugar biosynthesis; UDP-N-acetyl-alpha-D-glucosamine biosynthesis; N-acetyl-alpha-D-glucosamine 1-phosphate from alpha-D-glucosamine 6-phosphate (route II): step 2/2. Its pathway is nucleotide-sugar biosynthesis; UDP-N-acetyl-alpha-D-glucosamine biosynthesis; UDP-N-acetyl-alpha-D-glucosamine from N-acetyl-alpha-D-glucosamine 1-phosphate: step 1/1. It functions in the pathway bacterial outer membrane biogenesis; LPS lipid A biosynthesis. Catalyzes the last two sequential reactions in the de novo biosynthetic pathway for UDP-N-acetylglucosamine (UDP-GlcNAc). The C-terminal domain catalyzes the transfer of acetyl group from acetyl coenzyme A to glucosamine-1-phosphate (GlcN-1-P) to produce N-acetylglucosamine-1-phosphate (GlcNAc-1-P), which is converted into UDP-GlcNAc by the transfer of uridine 5-monophosphate (from uridine 5-triphosphate), a reaction catalyzed by the N-terminal domain. The chain is Bifunctional protein GlmU from Janthinobacterium sp. (strain Marseille) (Minibacterium massiliensis).